Here is a 140-residue protein sequence, read N- to C-terminus: MFARLCPVSETFGRLCPVSETFARLCPVSETFARLCPVSETFARLCPVSETFGRLCPVSEMFGRLSPVSETFGRLCPVSETFGRLCPVSEMFARLCPVSETFGRLSPVSEMFGRLCPVSEMFGRLCPVSEMFGRLCPVIT.

A run of 14 repeats spans residues 1 to 10, 11 to 20, 21 to 30, 31 to 40, 41 to 50, 51 to 60, 61 to 70, 71 to 80, 81 to 90, 91 to 100, 101 to 110, 111 to 120, 121 to 130, and 131 to 140. The tract at residues 1–140 is 14 X 10 AA tandem repeats of [MT]-F-[AG]-R-L-[CS]-P-V-[SI]-[ET]; sequence MFARLCPVSE…MFGRLCPVIT (140 aa).

This is an uncharacterized protein from Homo sapiens (Human).